We begin with the raw amino-acid sequence, 178 residues long: Fatty-acid and retinol-binding protein 1 (178 aa).

The first 16 residues, 1-16 (MYHRLILLALVGTTMA), serve as a signal peptide directing secretion. 2 coiled-coil regions span residues 67 to 89 (DAAL…ELRN) and 130 to 153 (KQAA…ELKV).

Belongs to the fatty-acid and retinol-binding protein (FARBP) family. Not glycosylated.

It is found in the secreted. Binds retinol and different fatty acids. The sequence is that of Fatty-acid and retinol-binding protein 1 from Brugia pahangi (Filarial nematode worm).